The chain runs to 61 residues: Small ribosomal subunit protein uS14 (61 aa).

Zn(2+) contacts are provided by C24, C27, C40, and C43.

This sequence belongs to the universal ribosomal protein uS14 family. Zinc-binding uS14 subfamily. Part of the 30S ribosomal subunit. Contacts proteins S3 and S10. Zn(2+) is required as a cofactor.

Functionally, binds 16S rRNA, required for the assembly of 30S particles and may also be responsible for determining the conformation of the 16S rRNA at the A site. This chain is Small ribosomal subunit protein uS14, found in Mycoplasmopsis pulmonis (strain UAB CTIP) (Mycoplasma pulmonis).